The sequence spans 413 residues: NADPH dehydrogenase afvA (413 aa).

Residue 53-56 coordinates FMN; sequence APLC. Y58 contacts substrate. The FMN site is built by A88 and Q130. 211 to 214 serves as a coordination point for substrate; sequence HAAH. Residues R264 and 370–371 contribute to the FMN site; that span reads GR.

It belongs to the NADH:flavin oxidoreductase/NADH oxidase family. NamA subfamily. The cofactor is FMN.

It catalyses the reaction A + NADPH + H(+) = AH2 + NADP(+). The protein operates within secondary metabolite biosynthesis. Its function is as follows. NADPH dehydrogenase; part of the gene cluster that mediates the biosynthesis of aflavarin, a bicoumarin that exhibits anti-insectan activity against the fungivorous beetle C.hemipterus. The sequence is that of NADPH dehydrogenase afvA from Aspergillus flavus (strain ATCC 200026 / FGSC A1120 / IAM 13836 / NRRL 3357 / JCM 12722 / SRRC 167).